A 335-amino-acid chain; its full sequence is Acetyl-coenzyme A carboxylase carboxyl transferase subunit alpha (335 aa).

In terms of domain architecture, CoA carboxyltransferase C-terminal spans 40-294; sequence QLETLATRRR…KEAIEKHLDT (255 aa).

This sequence belongs to the AccA family. As to quaternary structure, acetyl-CoA carboxylase is a heterohexamer composed of biotin carboxyl carrier protein (AccB), biotin carboxylase (AccC) and two subunits each of ACCase subunit alpha (AccA) and ACCase subunit beta (AccD).

Its subcellular location is the cytoplasm. The enzyme catalyses N(6)-carboxybiotinyl-L-lysyl-[protein] + acetyl-CoA = N(6)-biotinyl-L-lysyl-[protein] + malonyl-CoA. The protein operates within lipid metabolism; malonyl-CoA biosynthesis; malonyl-CoA from acetyl-CoA: step 1/1. In terms of biological role, component of the acetyl coenzyme A carboxylase (ACC) complex. First, biotin carboxylase catalyzes the carboxylation of biotin on its carrier protein (BCCP) and then the CO(2) group is transferred by the carboxyltransferase to acetyl-CoA to form malonyl-CoA. The polypeptide is Acetyl-coenzyme A carboxylase carboxyl transferase subunit alpha (Prochlorococcus marinus (strain MIT 9312)).